The following is a 324-amino-acid chain: Calmodulin-like protein 12 (324 aa).

EF-hand domains are found at residues 8 to 43 (DQIT…IGEK), 44 to 79 (PTKA…NQGH), 97 to 132 (DQIT…LGKN), 133 to 168 (RTKA…NQGH), 187 to 222 (DQIL…LGET), and 223 to 258 (QTKA…KMID). Ca(2+) is bound by residues aspartate 21, asparagine 23, aspartate 25, serine 27, glutamate 32, aspartate 57, aspartate 59, aspartate 61, threonine 63, glutamate 68, aspartate 110, asparagine 112, aspartate 114, serine 116, glutamate 121, aspartate 146, aspartate 148, aspartate 150, threonine 152, glutamate 157, aspartate 200, asparagine 202, aspartate 204, tyrosine 206, glutamate 211, aspartate 236, aspartate 238, aspartate 240, threonine 242, and glutamate 247.

The protein belongs to the calmodulin family. In terms of assembly, interacts with PID. Binds to ABCG36.

Its function is as follows. Potential calcium sensor that binds calcium in vitro. The sequence is that of Calmodulin-like protein 12 from Arabidopsis thaliana (Mouse-ear cress).